A 127-amino-acid polypeptide reads, in one-letter code: MAQSVPPGDIQTQPGTKIVFNAPYDDKHTYRIKVINSSARRIGYGIKTTNMKRLGVDPPCGVLDPKEAVLLAVSCDAFAFGQEDTNNDRITVEWTNTPDGAAKQFRREWFQGDGMVRRKNLPIEYNP.

Ala-2 carries the post-translational modification N-acetylalanine. In terms of domain architecture, MSP spans 9–126; it reads DIQTQPGTKI…RRKNLPIEYN (118 aa).

In terms of tissue distribution, sperm.

It is found in the cell projection. The protein resides in the pseudopodium. Its subcellular location is the cytoplasm. The protein localises to the cytoskeleton. Central component in molecular interactions underlying sperm crawling. Forms an extensive filament system that extends from sperm villipoda, along the leading edge of the pseudopod. The sequence is that of Major sperm protein 63 (msp-63) from Caenorhabditis elegans.